Here is a 423-residue protein sequence, read N- to C-terminus: Glucose-6-phosphate isomerase (423 aa).

The Proton donor role is filled by Glu279. Residues His300 and Lys413 contribute to the active site.

This sequence belongs to the GPI family.

The protein localises to the cytoplasm. It carries out the reaction alpha-D-glucose 6-phosphate = beta-D-fructose 6-phosphate. Its pathway is carbohydrate biosynthesis; gluconeogenesis. It functions in the pathway carbohydrate degradation; glycolysis; D-glyceraldehyde 3-phosphate and glycerone phosphate from D-glucose: step 2/4. Functionally, catalyzes the reversible isomerization of glucose-6-phosphate to fructose-6-phosphate. The chain is Glucose-6-phosphate isomerase from Acholeplasma laidlawii (strain PG-8A).